The sequence spans 591 residues: Aspartate--tRNA ligase (591 aa).

Glu-173 contributes to the L-aspartate binding site. The tract at residues 197-200 is aspartate; the sequence is QLFK. An L-aspartate-binding site is contributed by Arg-219. ATP-binding positions include 219–221 and Gln-228; that span reads RDE. L-aspartate is bound at residue His-448. ATP is bound at residue Glu-482. Arg-489 is an L-aspartate binding site. 534–537 contributes to the ATP binding site; that stretch reads GLDR.

The protein belongs to the class-II aminoacyl-tRNA synthetase family. Type 1 subfamily. As to quaternary structure, homodimer.

The protein localises to the cytoplasm. It catalyses the reaction tRNA(Asp) + L-aspartate + ATP = L-aspartyl-tRNA(Asp) + AMP + diphosphate. Catalyzes the attachment of L-aspartate to tRNA(Asp) in a two-step reaction: L-aspartate is first activated by ATP to form Asp-AMP and then transferred to the acceptor end of tRNA(Asp). This chain is Aspartate--tRNA ligase, found in Shewanella oneidensis (strain ATCC 700550 / JCM 31522 / CIP 106686 / LMG 19005 / NCIMB 14063 / MR-1).